We begin with the raw amino-acid sequence, 189 residues long: MNTLTIFGIAVALAMDAFAVSIAAGVFLRSIGLRHYFRLAWHFGLFQALMPIVGWYAGLSVRGLIERYDHWIAFFLLAFVSFNMIRESFDAGENHTKADPTRGLRLVLLSIATSIDALAVGLSLSVLNVSVWMPATVIGITAAVFTVGGLMMGSRAGDIPWLRRYADRVGAGVLLFIGLRILYAHGVFY.

6 consecutive transmembrane segments (helical) span residues 6–26 (IFGIAVALAMDAFAVSIAAGV), 39–59 (LAWHFGLFQALMPIVGWYAGL), 71–91 (WIAFFLLAFVSFNMIRESFDA), 106–126 (LVLLSIATSIDALAVGLSLSV), 131–151 (VWMPATVIGITAAVFTVGGLM), and 169–189 (VGAGVLLFIGLRILYAHGVFY).

This sequence belongs to the MntP (TC 9.B.29) family.

The protein localises to the cell inner membrane. Its function is as follows. Probably functions as a manganese efflux pump. This chain is Putative manganese efflux pump MntP, found in Desulfosudis oleivorans (strain DSM 6200 / JCM 39069 / Hxd3) (Desulfococcus oleovorans).